Reading from the N-terminus, the 543-residue chain is CTP synthase (543 aa).

The segment at 1-265 is amidoligase domain; sequence MTRYIFVTGG…DDYVVERFGL (265 aa). Ser-13 lines the CTP pocket. Ser-13 lines the UTP pocket. ATP contacts are provided by residues 14–19 and Asp-71; that span reads SLGKGI. Mg(2+) is bound by residues Asp-71 and Glu-139. Residues 146–148, 186–191, and Lys-222 each bind CTP; these read DIE and KTKPTQ. Residues 186-191 and Lys-222 contribute to the UTP site; that span reads KTKPTQ. Residues 290–541 enclose the Glutamine amidotransferase type-1 domain; sequence NIAMVGKYME…VNAALEYKAK (252 aa). L-glutamine is bound at residue Gly-351. The Nucleophile; for glutamine hydrolysis role is filled by Cys-378. Residues 379-382, Glu-402, and Arg-469 contribute to the L-glutamine site; that span reads LGMQ. Active-site residues include His-514 and Glu-516.

The protein belongs to the CTP synthase family. Homotetramer.

It catalyses the reaction UTP + L-glutamine + ATP + H2O = CTP + L-glutamate + ADP + phosphate + 2 H(+). It carries out the reaction L-glutamine + H2O = L-glutamate + NH4(+). The enzyme catalyses UTP + NH4(+) + ATP = CTP + ADP + phosphate + 2 H(+). It functions in the pathway pyrimidine metabolism; CTP biosynthesis via de novo pathway; CTP from UDP: step 2/2. Allosterically activated by GTP, when glutamine is the substrate; GTP has no effect on the reaction when ammonia is the substrate. The allosteric effector GTP functions by stabilizing the protein conformation that binds the tetrahedral intermediate(s) formed during glutamine hydrolysis. Inhibited by the product CTP, via allosteric rather than competitive inhibition. In terms of biological role, catalyzes the ATP-dependent amination of UTP to CTP with either L-glutamine or ammonia as the source of nitrogen. Regulates intracellular CTP levels through interactions with the four ribonucleotide triphosphates. This Stutzerimonas stutzeri (strain A1501) (Pseudomonas stutzeri) protein is CTP synthase.